A 177-amino-acid polypeptide reads, in one-letter code: Deoxyuridine 5'-triphosphate nucleotidohydrolase (177 aa).

Substrate is bound by residues 83–85 (RSG), Asn96, 100–102 (TID), and Lys110. Over residues 150–163 (DLTSSQTDLSNQPN) the composition is skewed to polar residues. Residues 150 to 177 (DLTSSQTDLSNQPNTGRGTGGFGSTGQK) form a disordered region. Residues 166-177 (RGTGGFGSTGQK) show a composition bias toward gly residues.

Belongs to the dUTPase family. Mg(2+) serves as cofactor.

The enzyme catalyses dUTP + H2O = dUMP + diphosphate + H(+). It functions in the pathway pyrimidine metabolism; dUMP biosynthesis; dUMP from dCTP (dUTP route): step 2/2. Functionally, this enzyme is involved in nucleotide metabolism: it produces dUMP, the immediate precursor of thymidine nucleotides and it decreases the intracellular concentration of dUTP so that uracil cannot be incorporated into DNA. The polypeptide is Deoxyuridine 5'-triphosphate nucleotidohydrolase (Bartonella bacilliformis (strain ATCC 35685 / KC583 / Herrer 020/F12,63)).